The chain runs to 330 residues: Aspartate--ammonia ligase (330 aa).

It belongs to the class-II aminoacyl-tRNA synthetase family. AsnA subfamily.

It localises to the cytoplasm. It carries out the reaction L-aspartate + NH4(+) + ATP = L-asparagine + AMP + diphosphate + H(+). It participates in amino-acid biosynthesis; L-asparagine biosynthesis; L-asparagine from L-aspartate (ammonia route): step 1/1. The polypeptide is Aspartate--ammonia ligase (Enterobacter sp. (strain 638)).